The primary structure comprises 274 residues: Ethanolamine ammonia-lyase small subunit (274 aa).

Residues V161, E182, and C211 each contribute to the adenosylcob(III)alamin site.

Belongs to the EutC family. The basic unit is a heterodimer which dimerizes to form tetramers. The heterotetramers trimerize; 6 large subunits form a core ring with 6 small subunits projecting outwards. Adenosylcob(III)alamin serves as cofactor.

It localises to the bacterial microcompartment. It carries out the reaction ethanolamine = acetaldehyde + NH4(+). It functions in the pathway amine and polyamine degradation; ethanolamine degradation. Catalyzes the deamination of various vicinal amino-alcohols to oxo compounds. Allows this organism to utilize ethanolamine as the sole source of nitrogen and carbon in the presence of external vitamin B12. In Pseudomonas fluorescens (strain ATCC BAA-477 / NRRL B-23932 / Pf-5), this protein is Ethanolamine ammonia-lyase small subunit.